The primary structure comprises 358 residues: Na(+)/H(+) exchange regulatory cofactor NHE-RF1 (358 aa).

The residue at position 2 (serine 2) is an N-acetylserine. A phosphoserine mark is found at serine 2 and serine 46. One can recognise a PDZ 1 domain in the interval leucine 14–glutamate 94. The segment covering glutamine 114–glycine 132 has biased composition (low complexity). A disordered region spans residues glutamine 114–glycine 192. Basic and acidic residues predominate over residues asparagine 135–proline 152. The region spanning leucine 154–glutamate 234 is the PDZ 2 domain. Residues serine 162, serine 269, serine 280, serine 290, and serine 291 each carry the phosphoserine modification. Residues alanine 277–leucine 358 are disordered. Residues serine 288–glutamine 306 show a composition bias toward polar residues. Phosphothreonine is present on threonine 293. Serine 294, serine 299, and serine 302 each carry phosphoserine. A compositionally biased stretch (low complexity) spans aspartate 307 to proline 319. Residues tryptophan 348–leucine 358 show a composition bias toward basic and acidic residues.

In terms of assembly, homodimer, and heterodimer with NHERF2. Binds the N-termini of EZR, RDX and MSN. Binds the C-termini of PDGFRA, PDGFRB, ADRB2, NOS2 and CFTR. Binds ARHGAP17, EPI64, RACK1, OPRK1, GNAQ, CTNNB1 and PLCB3. Binds PDZK1. Interacts with CLCN3. Binds the C-terminus of PAG1. In resting T-cells, part of a PAG1-NHERF1-MSN complex which is disrupted upon TCR activation. Forms a complex with CFTR and SLC4A7. Forms a complex with SLC4A7 and ATP6V1B1. Interacts with TRPC4 (via the PDZ-binding domain). Directly interacts with HTR4. Interacts (via the PDZ 1 domain) with PODXL (via the C-terminal PDZ-binding motif DTHL); interaction is not detected in glomerular epithelium cells. Interacts (via the PDZ 1 domain) with PODXL (via the C-terminal PDZ-binding motif DTHL); the interaction take place early in the secretory pathway and is necessary for its apical membrane sorting. Interacts with SLC26A3. Interacts with MCC. Interacts with SLC34A1. Interacts (via the PDZ domains) with SLC26A6 isoform 4 and isoform 5. Interacts (via PDZ domains) with ACE2 (via PDZ-binding motif); the interaction may enhance ACE2 membrane residence. Post-translationally, phosphorylated on serine residues. As to expression, detected in liver, kidney, pancreas, prostate, spleen, small intestine and placenta, in particular in the syncytiotrophoblast.

It is found in the cytoplasm. It localises to the apical cell membrane. Its subcellular location is the endomembrane system. The protein localises to the cell projection. The protein resides in the filopodium. It is found in the ruffle. It localises to the microvillus. Functionally, scaffold protein that connects plasma membrane proteins with members of the ezrin/moesin/radixin family and thereby helps to link them to the actin cytoskeleton and to regulate their surface expression. Necessary for recycling of internalized ADRB2. Was first known to play a role in the regulation of the activity and subcellular location of SLC9A3. Necessary for cAMP-mediated phosphorylation and inhibition of SLC9A3. May enhance Wnt signaling. May participate in HTR4 targeting to microvilli. Involved in the regulation of phosphate reabsorption in the renal proximal tubules. Involved in sperm capacitation. May participate in the regulation of the chloride and bicarbonate homeostasis in spermatozoa. This is Na(+)/H(+) exchange regulatory cofactor NHE-RF1 from Homo sapiens (Human).